The following is a 290-amino-acid chain: ATP synthase gamma chain (290 aa).

Belongs to the ATPase gamma chain family. In terms of assembly, F-type ATPases have 2 components, CF(1) - the catalytic core - and CF(0) - the membrane proton channel. CF(1) has five subunits: alpha(3), beta(3), gamma(1), delta(1), epsilon(1). CF(0) has three main subunits: a, b and c.

Its subcellular location is the cell membrane. Functionally, produces ATP from ADP in the presence of a proton gradient across the membrane. The gamma chain is believed to be important in regulating ATPase activity and the flow of protons through the CF(0) complex. The protein is ATP synthase gamma chain of Wolbachia pipientis subsp. Culex pipiens (strain wPip).